Consider the following 123-residue polypeptide: Large ribosomal subunit protein eL8 (123 aa).

Belongs to the eukaryotic ribosomal protein eL8 family. As to quaternary structure, part of the 50S ribosomal subunit. Probably part of the RNase P complex.

It is found in the cytoplasm. Its function is as follows. Multifunctional RNA-binding protein that recognizes the K-turn motif in ribosomal RNA, the RNA component of RNase P, box H/ACA, box C/D and box C'/D' sRNAs. The polypeptide is Large ribosomal subunit protein eL8 (Methanopyrus kandleri (strain AV19 / DSM 6324 / JCM 9639 / NBRC 100938)).